The following is a 212-amino-acid chain: Probable GH family 25 lysozyme 2 (212 aa).

An N-terminal signal peptide occupies residues 1-19 (MRFIALLISFFALLKVISA). The 193-residue stretch at 20-212 (ISGVDISSAS…GLGFDLNWYP (193 aa)) folds into the Ch-type lysozyme domain. Catalysis depends on residues D24, D112, and E114.

This sequence belongs to the glycosyl hydrolase 25 family.

It localises to the secreted. It catalyses the reaction Hydrolysis of (1-&gt;4)-beta-linkages between N-acetylmuramic acid and N-acetyl-D-glucosamine residues in a peptidoglycan and between N-acetyl-D-glucosamine residues in chitodextrins.. This is Probable GH family 25 lysozyme 2 from Dictyostelium discoideum (Social amoeba).